The sequence spans 173 residues: Photosystem I assembly protein Ycf3 (173 aa).

TPR repeat units lie at residues 35-68, 72-105, and 120-153; these read AYVYYRDGLSAQNAGDYAEALENYEESLKLEESP, SETLKNMAIIYMSNGDEDLALDTYQRALDQNSNQ, and GRTAQEAGLQDEADRLFDRAADVWTQAVRLYPGG.

It belongs to the Ycf3 family.

It is found in the cellular thylakoid membrane. Functionally, essential for the assembly of the photosystem I (PSI) complex. May act as a chaperone-like factor to guide the assembly of the PSI subunits. The protein is Photosystem I assembly protein Ycf3 of Prochlorococcus marinus (strain MIT 9313).